A 467-amino-acid polypeptide reads, in one-letter code: MVQKQQASAGPGTEPKKRRRVGFSPADTGVEANECIKIYLVSSKEEVDSSDISSVKPVDLNDFFDGDGKIYGYQGLKINVWINSISLHSYADITYQSTINGDKGITDLKSALQNIFAETIVDTKDEFLQTFSTQRDFIRNMVSNGEVMHAGATDGSSKNAEVVPSDPQVIRMEIGSPNAGLLYSRLVPLVLLFVDGSNPIDVTDPDWHLYLLIQKKEEKEDPLYRIVGFTAIYKFYRYPDRLRMRLSQILVLPSFQGKGLGSYLMEVVNNVAITENVYDLTVEEPSEKFQHIRTCIDINRLRSFDPIKPDIDSAVQTLTKGKLSKKAQIPRFTPPLNAIEKVRESLKINKKQFLKCWEILIYLALDPIDKYMEDYTSVITNHVRTDILGKDIETPKKQVVDVPSSFEPEASFVVFKSVNGEEANTNVQVDENKPDQEQQLKQLVEERIREIKLVAEKVSKSGQTLKV.

The segment at 1–24 (MVQKQQASAGPGTEPKKRRRVGFS) is disordered. Acetyl-CoA contacts are provided by residues 249-251 (ILV) and 256-262 (QGKGLGS). Glu-283 (proton donor/acceptor) is an active-site residue.

This sequence belongs to the HAT1 family.

The protein resides in the nucleus. It localises to the cytoplasm. It catalyses the reaction L-lysyl-[protein] + acetyl-CoA = N(6)-acetyl-L-lysyl-[protein] + CoA + H(+). Functionally, acetylates soluble but not nucleosomal H4. Acetylates 'Lys-12' of histone H4. In Arabidopsis thaliana (Mouse-ear cress), this protein is Histone acetyltransferase type B catalytic subunit (HAG2).